A 405-amino-acid polypeptide reads, in one-letter code: L-carnitine CoA-transferase (405 aa).

2 residues coordinate CoA: K97 and R104. D169 acts as the Nucleophile in catalysis.

The protein belongs to the CoA-transferase III family. CaiB subfamily. In terms of assembly, homodimer.

It localises to the cytoplasm. It carries out the reaction crotonobetainyl-CoA + (R)-carnitine = crotonobetaine + (R)-carnitinyl-CoA. The enzyme catalyses 4-(trimethylamino)butanoyl-CoA + (R)-carnitine = (R)-carnitinyl-CoA + 4-(trimethylamino)butanoate. The protein operates within amine and polyamine metabolism; carnitine metabolism. Catalyzes the reversible transfer of the CoA moiety from gamma-butyrobetainyl-CoA to L-carnitine to generate L-carnitinyl-CoA and gamma-butyrobetaine. Is also able to catalyze the reversible transfer of the CoA moiety from gamma-butyrobetainyl-CoA or L-carnitinyl-CoA to crotonobetaine to generate crotonobetainyl-CoA. The sequence is that of L-carnitine CoA-transferase from Escherichia coli O6:K15:H31 (strain 536 / UPEC).